The primary structure comprises 299 residues: Phosphoribosylaminoimidazole-succinocarboxamide synthase (299 aa).

The disordered stretch occupies residues 259-279; the sequence is PESGWDRKSEQPPPPLPQHVV.

Belongs to the SAICAR synthetase family.

It catalyses the reaction 5-amino-1-(5-phospho-D-ribosyl)imidazole-4-carboxylate + L-aspartate + ATP = (2S)-2-[5-amino-1-(5-phospho-beta-D-ribosyl)imidazole-4-carboxamido]succinate + ADP + phosphate + 2 H(+). The protein operates within purine metabolism; IMP biosynthesis via de novo pathway; 5-amino-1-(5-phospho-D-ribosyl)imidazole-4-carboxamide from 5-amino-1-(5-phospho-D-ribosyl)imidazole-4-carboxylate: step 1/2. This is Phosphoribosylaminoimidazole-succinocarboxamide synthase from Streptomyces avermitilis (strain ATCC 31267 / DSM 46492 / JCM 5070 / NBRC 14893 / NCIMB 12804 / NRRL 8165 / MA-4680).